The chain runs to 116 residues: Large ribosomal subunit protein bL17 (116 aa).

This sequence belongs to the bacterial ribosomal protein bL17 family. Part of the 50S ribosomal subunit. Contacts protein L32.

In Wolinella succinogenes (strain ATCC 29543 / DSM 1740 / CCUG 13145 / JCM 31913 / LMG 7466 / NCTC 11488 / FDC 602W) (Vibrio succinogenes), this protein is Large ribosomal subunit protein bL17.